The following is a 1396-amino-acid chain: Actin cytoskeleton-regulatory complex protein PAN1 (1396 aa).

Positions 1-20 (MYNPYQQQQQGMGYNPQQQT) are disordered. The region spanning 122–211 (DQKKFEHLFR…EKWLNEVRSF (90 aa)) is the EH 1 domain. Residues 155-190 (LSAVTLAEIWNLSDIDKTGSLLFPEFALSLHLCSMA) enclose the EF-hand 1 domain. 2 stretches are compositionally biased toward polar residues: residues 249-267 (TGYL…QPQV) and 324-342 (GPLN…QQQR). Disordered regions lie at residues 249–269 (TGYL…QVTG) and 318–383 (IPAQ…TGGF). A compositionally biased stretch (low complexity) spans 343–371 (TGGLPQQLTGYQGPPQGQGQQLQQQRTGG). A compositionally biased stretch (polar residues) spans 374-383 (QVQSQPTGGF). One can recognise an EH 2 domain in the interval 472–561 (EKQIYDGLFQ…PELIPPADRT (90 aa)). Positions 505–540 (LSRSDLESIWTLVDTDDTGKLNKNQFAVAMHLIYRR) constitute an EF-hand 2 domain. Disordered stretches follow at residues 569–630 (LKNS…SSSD), 746–771 (NPSW…TDYD), 877–916 (RRNI…YATP), 933–1369 (ERLA…IGAL), and 1377–1396 (ASLR…GRVL). Residues 877–893 (RRNIAKSQKQEQTREPL) are compositionally biased toward basic and acidic residues. 2 stretches are compositionally biased toward polar residues: residues 895 to 904 (KQQTNASLVS) and 1000 to 1016 (QPNS…QNVV). 2 stretches are compositionally biased toward basic and acidic residues: residues 1032-1049 (YKAI…ERER) and 1056-1077 (AKEE…REME). A coiled-coil region spans residues 1037–1093 (KQKQEMEARERERKLRKQKAKEERLAKIKKEMEEMKKREMEESQDEEEEEAKQVTSV). Polar residues predominate over residues 1089–1132 (QVTSVHVSRAQSSNANSNVIPQQETATENVNTVSQPTSTDTAKQ). Low complexity predominate over residues 1146-1161 (NNNTSQNSTVTNTGTN). Positions 1171–1180 (TKIDPHKAEA) are enriched in basic and acidic residues. Residues 1196-1205 (DSEEEESEEE) show a composition bias toward acidic residues. Positions 1237-1249 (DAEKVSEQEHENA) are enriched in basic and acidic residues. Polar residues predominate over residues 1251–1268 (QVASTPLSNDDNGKTDSG). Composition is skewed to pro residues over residues 1284–1327 (PPIP…PPSV) and 1337–1350 (SMPP…PPAA). A compositionally biased stretch (polar residues) spans 1352–1362 (NNTSSSQQASG). One can recognise a WH2 domain in the interval 1365 to 1382 (NIGALLGQITGGASLRKV).

Belongs to the PAN1 family. In terms of assembly, component of the PAN1 actin cytoskeleton-regulatory complex.

It localises to the cell membrane. The protein resides in the endosome membrane. It is found in the cytoplasm. The protein localises to the cytoskeleton. Its subcellular location is the actin patch. Component of the PAN1 actin cytoskeleton-regulatory complex required for the internalization of endosomes during actin-coupled endocytosis. The complex links the site of endocytosis to the cell membrane-associated actin cytoskeleton. Mediates uptake of external molecules and vacuolar degradation of plasma membrane proteins. Plays a role in the proper organization of the cell membrane-associated actin cytoskeleton and promotes its destabilization. This chain is Actin cytoskeleton-regulatory complex protein PAN1 (PAN1), found in Candida albicans (strain SC5314 / ATCC MYA-2876) (Yeast).